Here is a 670-residue protein sequence, read N- to C-terminus: Beta-fructofuranosidase 1 (670 aa).

Residues 1-40 (MIPAVADPTTLDGGGARRPLLPETDPRGRAAAGAEQKRPP) are disordered. Topologically, residues 1–44 (MIPAVADPTTLDGGGARRPLLPETDPRGRAAAGAEQKRPPATPT) are cytoplasmic. Residues 1 to 112 (MIPAVADPTT…APLLGSGALQ (112 aa)) constitute a propeptide, removed in mature form. Residues 45-65 (VLTAVVSAVLLLVLVAVTVLA) traverse the membrane as a helical; Signal-anchor for type II membrane protein segment. Residues 66-670 (SQHVDGQAGG…RPYPATTTSL (605 aa)) are Lumenal-facing. Substrate-binding positions include 136-139 (WMND), Q155, and W163. D139 is a catalytic residue. Residue N165 is glycosylated (N-linked (GlcNAc...) asparagine). Substrate is bound by residues 198 to 199 (WS) and 263 to 264 (RD). N-linked (GlcNAc...) asparagine glycosylation occurs at N275. Substrate is bound by residues E322 and D362. N518 carries N-linked (GlcNAc...) asparagine glycosylation. A disulfide bridge links C519 with C567. 2 N-linked (GlcNAc...) asparagine glycosylation sites follow: N595 and N639.

It belongs to the glycosyl hydrolase 32 family. May be present in two forms, a 70 kDa monomer and a heterodimer of the 30 kDa and 38 kDa subunits. The ratio of the levels of the two forms within cells appears to be regulated developmentally.

The protein resides in the membrane. It localises to the vacuole lumen. The enzyme catalyses Hydrolysis of terminal non-reducing beta-D-fructofuranoside residues in beta-D-fructofuranosides.. Its pathway is glycan biosynthesis; sucrose metabolism. The protein is Beta-fructofuranosidase 1 (IVR1) of Zea mays (Maize).